The primary structure comprises 92 residues: Small ribosomal subunit protein uS19 (92 aa).

Belongs to the universal ribosomal protein uS19 family.

Functionally, protein S19 forms a complex with S13 that binds strongly to the 16S ribosomal RNA. The protein is Small ribosomal subunit protein uS19 of Bartonella henselae (strain ATCC 49882 / DSM 28221 / CCUG 30454 / Houston 1) (Rochalimaea henselae).